A 308-amino-acid polypeptide reads, in one-letter code: HPr kinase/phosphorylase (308 aa).

Residues His-138 and Lys-159 contribute to the active site. 153–160 is an ATP binding site; that stretch reads GESGLGKS. Ser-160 serves as a coordination point for Mg(2+). Asp-177 serves as the catalytic Proton acceptor; for phosphorylation activity. Proton donor; for dephosphorylation activity. Residues 201 to 210 form an important for the catalytic mechanism of both phosphorylation and dephosphorylation region; that stretch reads LEVRGLGLLD. Glu-202 provides a ligand contact to Mg(2+). Arg-243 is an active-site residue. The interval 264–269 is important for the catalytic mechanism of dephosphorylation; sequence QVAAGR.

The protein belongs to the HPrK/P family. As to quaternary structure, homohexamer. Mg(2+) is required as a cofactor.

The catalysed reaction is [HPr protein]-L-serine + ATP = [HPr protein]-O-phospho-L-serine + ADP + H(+). It catalyses the reaction [HPr protein]-O-phospho-L-serine + phosphate + H(+) = [HPr protein]-L-serine + diphosphate. In terms of biological role, catalyzes the ATP- as well as the pyrophosphate-dependent phosphorylation of a specific serine residue in HPr, a phosphocarrier protein of the phosphoenolpyruvate-dependent sugar phosphotransferase system (PTS). HprK/P also catalyzes the pyrophosphate-producing, inorganic phosphate-dependent dephosphorylation (phosphorolysis) of seryl-phosphorylated HPr (P-Ser-HPr). This chain is HPr kinase/phosphorylase, found in Bordetella petrii (strain ATCC BAA-461 / DSM 12804 / CCUG 43448).